We begin with the raw amino-acid sequence, 152 residues long: Large ribosomal subunit protein bL9 (152 aa).

It belongs to the bacterial ribosomal protein bL9 family.

In terms of biological role, binds to the 23S rRNA. The chain is Large ribosomal subunit protein bL9 from Acaryochloris marina (strain MBIC 11017).